The sequence spans 454 residues: MFLAQRSLCSLSGRAKFLKTISSSKILGFSTSAKMSLKFTNAKRIEGLDSNVWIEFTKLAADPSVVNLGQGFPDISPPTYVKEELSKIAAIDSLNQYTRGFGHPSLVKALSYLYEKLYQKQIDSNKEILVTVGAYGSLFNTIQALIDEGDEVILIVPFYDCYEPMVRMAGATPVFIPLRSKPVYGKRWSSSDWTLDPQELESKFNSKTKAIILNTPHNPLGKVYNREELQVIADLCIKYDTLCISDEVYEWLVYSGNKHLKIATFPGMWERTITIGSAGKTFSVTGWKLGWSIGPNHLIKHLQTVQQNTIYTCATPLQEALAQAFWIDIKRMDDPECYFNSLPKELEVKRDRMVRLLESVGLKPIVPDGGYFIIADVSLLDPDLSDMKNNEPYDYKFVKWMTKHKKLSAIPVSAFCNSETKSQFEKFVRFCFIKKDSTLDAAEEIIKAWSVQKS.

N-acetylserine is present on Phe-2. Residue Gly-71 participates in substrate binding. Lys-116 bears the N6-acetyllysine; alternate mark. The residue at position 116 (Lys-116) is an N6-succinyllysine; alternate. Asn-218 is a substrate binding site. Lys-280 is subject to N6-(pyridoxal phosphate)lysine. Substrate is bound at residue Arg-429.

This sequence belongs to the class-I pyridoxal-phosphate-dependent aminotransferase family. Homodimer. Pyridoxal 5'-phosphate is required as a cofactor.

It carries out the reaction L-kynurenine + 2-oxoglutarate = kynurenate + L-glutamate + H2O. The catalysed reaction is L-kynurenine + glyoxylate = kynurenate + glycine + H2O. It catalyses the reaction 3-hydroxy-L-kynurenine + glyoxylate = xanthurenate + glycine + H2O. The enzyme catalyses an S-substituted L-cysteine + H2O = a thiol + pyruvate + NH4(+). It participates in amino-acid degradation; L-kynurenine degradation; kynurenate from L-kynurenine: step 1/2. In terms of biological role, catalyzes the irreversible transamination of the L-tryptophan metabolite L-kynurenine to form kynurenic acid (KA), an intermediate in the tryptophan catabolic pathway which is also a broad spectrum antagonist of the three ionotropic excitatory amino acid receptors among others. May catalyze the beta-elimination of S-conjugates and Se-conjugates of L-(seleno)cysteine, resulting in the cleavage of the C-S or C-Se bond. Has transaminase activity towards L-kynurenine, tryptophan, phenylalanine, serine, cysteine, methionine, histidine, glutamine and asparagine with glyoxylate as an amino group acceptor (in vitro). Has lower activity with 2-oxoglutarate as amino group acceptor (in vitro). This Homo sapiens (Human) protein is Kynurenine--oxoglutarate transaminase 3.